Here is a 287-residue protein sequence, read N- to C-terminus: Pantothenate synthetase (287 aa).

Position 30-37 (30-37 (MGNLHSGH)) interacts with ATP. The active-site Proton donor is the His-37. Residue Gln-61 participates in (R)-pantoate binding. Residue Gln-61 participates in beta-alanine binding. ATP is bound at residue 149–152 (GEKD). (R)-pantoate is bound at residue Gln-155. Residues Val-178 and 186-189 (LSSR) each bind ATP.

It belongs to the pantothenate synthetase family. Homodimer.

Its subcellular location is the cytoplasm. It catalyses the reaction (R)-pantoate + beta-alanine + ATP = (R)-pantothenate + AMP + diphosphate + H(+). It participates in cofactor biosynthesis; (R)-pantothenate biosynthesis; (R)-pantothenate from (R)-pantoate and beta-alanine: step 1/1. Catalyzes the condensation of pantoate with beta-alanine in an ATP-dependent reaction via a pantoyl-adenylate intermediate. In Pseudomonas entomophila (strain L48), this protein is Pantothenate synthetase.